Here is a 402-residue protein sequence, read N- to C-terminus: Deacetylase Oant_2987 (402 aa).

Positions 70, 72, 168, 201, 224, and 284 each coordinate Zn(2+). Lys-168 is modified (N6-carboxylysine).

This sequence belongs to the metallo-dependent hydrolases superfamily. Atu3266/EF_0837 deacetylase family. The cofactor is Zn(2+).

Its function is as follows. Esterase that catalyzes the deacetylation of acetyl-(R)-mandelate (in vitro). Can also hydrolyze acetyl glycolate, but with lower efficiency. Has very low N-acetyl-D-amino acid deacetylase activity with N-acetyl-D-serine and N-acetyl-D-threonine (in vitro). Theoretical substrate docking studies suggest that other N-acetylated amino acids may optimally occupy the active site and may in fact be the physiological substrates. This is Deacetylase Oant_2987 from Brucella anthropi (strain ATCC 49188 / DSM 6882 / CCUG 24695 / JCM 21032 / LMG 3331 / NBRC 15819 / NCTC 12168 / Alc 37) (Ochrobactrum anthropi).